A 164-amino-acid polypeptide reads, in one-letter code: Hoefavidin (164 aa).

The first 22 residues, 1-22 (MNKVLAIVLTITVAGFAQTAFA), serve as a signal peptide directing secretion. Positions 32–155 (KLLAGASNWV…GQDDFMQSVA (124 aa)) constitute an Avidin-like domain. Asn-42, Ser-46, Tyr-68, Asn-70, and Gly-76 together coordinate biotin. The cysteines at positions 77 and 108 are disulfide-linked. Biotin-binding residues include Ser-110, Thr-112, and Asp-148.

The protein belongs to the avidin/streptavidin family. In terms of assembly, exhibits a dynamic oligomeric assembly: the apo form exits as homooctamers, which dissociate into homodimers upon biotin binding. The X-ray structure of the intact hoefavidin reveals unique crystal packing generated by an octameric cylindrical structure wherein the C-terminal segments of each monomer are introduced into the entrance of the biotin-binding site of an adjacent non-canonical monomer.

The protein resides in the secreted. The exact role played by hoefavidin in the host organism is still obscure. Forms a strong non-covalent complex with biotin and 2-iminobiotin. This is Hoefavidin from Hoeflea phototrophica (strain DSM 17068 / NCIMB 14078 / DFL-43).